We begin with the raw amino-acid sequence, 326 residues long: Transposase InsH for insertion sequence element IS5Y (326 aa).

The protein belongs to the transposase 11 family.

In terms of biological role, involved in the transposition of the insertion sequence IS5. The chain is Transposase InsH for insertion sequence element IS5Y (insH5) from Escherichia coli (strain K12).